A 334-amino-acid chain; its full sequence is L-lactate dehydrogenase B chain (334 aa).

Residue 30-58 participates in NAD(+) binding; it reads GQVGMACAVSVLLKELADELALVDILEDK. R107, N139, and R170 together coordinate substrate. An NAD(+)-binding site is contributed by N139. Residue H194 is the Proton acceptor of the active site. T249 serves as a coordination point for substrate.

The protein belongs to the LDH/MDH superfamily. LDH family. In terms of assembly, homotetramer.

Its subcellular location is the cytoplasm. The catalysed reaction is (S)-lactate + NAD(+) = pyruvate + NADH + H(+). It participates in fermentation; pyruvate fermentation to lactate; (S)-lactate from pyruvate: step 1/1. Functionally, interconverts simultaneously and stereospecifically pyruvate and lactate with concomitant interconversion of NADH and NAD(+). The sequence is that of L-lactate dehydrogenase B chain (ldhb) from Xenopus laevis (African clawed frog).